The following is a 293-amino-acid chain: N-acetylneuraminate lyase (293 aa).

2 residues coordinate aceneuramate: Ser48 and Ser49. Tyr137 (proton donor) is an active-site residue. Lys165 serves as the catalytic Schiff-base intermediate with substrate. Aceneuramate contacts are provided by Thr167, Gly189, Asp191, Glu192, and Ser208.

Belongs to the DapA family. NanA subfamily. As to quaternary structure, homotetramer.

Its subcellular location is the cytoplasm. The enzyme catalyses aceneuramate = aldehydo-N-acetyl-D-mannosamine + pyruvate. The protein operates within amino-sugar metabolism; N-acetylneuraminate degradation; D-fructose 6-phosphate from N-acetylneuraminate: step 1/5. Functionally, catalyzes the reversible aldol cleavage of N-acetylneuraminic acid (sialic acid; Neu5Ac) to form pyruvate and N-acetylmannosamine (ManNAc) via a Schiff base intermediate. This chain is N-acetylneuraminate lyase, found in Staphylococcus carnosus (strain TM300).